We begin with the raw amino-acid sequence, 230 residues long: Somatolactin (230 aa).

The N-terminal stretch at 1–23 (MKKTTVLQVCMVFVVCSLQAVIG) is a signal peptide. 3 disulfide bridges follow: C28–C38, C87–C202, and C219–C227. The N-linked (GlcNAc...) asparagine glycan is linked to N226.

The protein belongs to the somatotropin/prolactin family.

It localises to the secreted. This is Somatolactin from Carassius auratus (Goldfish).